A 324-amino-acid polypeptide reads, in one-letter code: tRNA pseudouridine synthase B (324 aa).

Asp-49 functions as the Nucleophile in the catalytic mechanism.

It belongs to the pseudouridine synthase TruB family. Type 1 subfamily.

It catalyses the reaction uridine(55) in tRNA = pseudouridine(55) in tRNA. Functionally, responsible for synthesis of pseudouridine from uracil-55 in the psi GC loop of transfer RNAs. This Brucella anthropi (strain ATCC 49188 / DSM 6882 / CCUG 24695 / JCM 21032 / LMG 3331 / NBRC 15819 / NCTC 12168 / Alc 37) (Ochrobactrum anthropi) protein is tRNA pseudouridine synthase B.